The chain runs to 110 residues: UPF0122 protein STER_0914 (110 aa).

The protein belongs to the UPF0122 family.

Its function is as follows. Might take part in the signal recognition particle (SRP) pathway. This is inferred from the conservation of its genetic proximity to ftsY/ffh. May be a regulatory protein. The chain is UPF0122 protein STER_0914 from Streptococcus thermophilus (strain ATCC BAA-491 / LMD-9).